Reading from the N-terminus, the 111-residue chain is Secreted RxLR effector protein 81 (111 aa).

An N-terminal signal peptide occupies residues 1–16; that stretch reads MLVSMLLIIFPNGVSL. N52 carries an N-linked (GlcNAc...) asparagine glycan. The tract at residues 73-92 is disordered; sequence KKFSSSDEDKSRDVRRRLRP. Positions 88–91 match the RxLR-dEER motif; sequence RRLR.

The protein belongs to the RxLR effector family.

It localises to the secreted. It is found in the host nucleus. The protein localises to the host cytoplasm. Secreted effector that partially suppresses the host cell death induced by cell death-inducing proteins. The protein is Secreted RxLR effector protein 81 of Plasmopara viticola (Downy mildew of grapevine).